A 130-amino-acid chain; its full sequence is 3-aminoacrylate deaminase RutC (130 aa).

The protein belongs to the RutC family.

The enzyme catalyses (Z)-3-aminoacrylate + H2O + H(+) = 3-oxopropanoate + NH4(+). In terms of biological role, involved in pyrimidine catabolism. Catalyzes the deamination of 3-aminoacrylate to malonic semialdehyde, a reaction that can also occur spontaneously. RutC may facilitate the reaction and modulate the metabolic fitness, rather than catalyzing essential functions. In Klebsiella pneumoniae (strain 342), this protein is 3-aminoacrylate deaminase RutC.